We begin with the raw amino-acid sequence, 377 residues long: Chaperone protein DnaJ 1 (377 aa).

The J domain maps to 4 to 68; it reads DYYQTLGVTR…EIRQRYDQFG (65 aa). The segment at 136-218 adopts a CR-type zinc-finger fold; the sequence is GGEKEIRIPH…CNGVGRKQET (83 aa). 8 residues coordinate Zn(2+): C149, C152, C166, C169, C192, C195, C206, and C209. CXXCXGXG motif repeat units follow at residues 149–156, 166–173, 192–199, and 206–213; these read CQVCEGTG, CGTCNGAG, CPTCNGSG, and CEACNGVG.

It belongs to the DnaJ family. In terms of assembly, homodimer. It depends on Zn(2+) as a cofactor.

The protein localises to the cytoplasm. Its function is as follows. Participates actively in the response to hyperosmotic and heat shock by preventing the aggregation of stress-denatured proteins and by disaggregating proteins, also in an autonomous, DnaK-independent fashion. Unfolded proteins bind initially to DnaJ; upon interaction with the DnaJ-bound protein, DnaK hydrolyzes its bound ATP, resulting in the formation of a stable complex. GrpE releases ADP from DnaK; ATP binding to DnaK triggers the release of the substrate protein, thus completing the reaction cycle. Several rounds of ATP-dependent interactions between DnaJ, DnaK and GrpE are required for fully efficient folding. Also involved, together with DnaK and GrpE, in the DNA replication of plasmids through activation of initiation proteins. This Synechocystis sp. (strain ATCC 27184 / PCC 6803 / Kazusa) protein is Chaperone protein DnaJ 1.